Reading from the N-terminus, the 226-residue chain is Ribonuclease 3 (226 aa).

In terms of domain architecture, RNase III spans 7-129; it reads LPRLCRTLGY…IIGAVYLDAD (123 aa). Residue Glu-42 participates in Mg(2+) binding. The active site involves Asp-46. Positions 115 and 118 each coordinate Mg(2+). Residue Glu-118 is part of the active site. One can recognise a DRBM domain in the interval 156-226; the sequence is DAKTLLQEYL…AAQVLELLNQ (71 aa).

This sequence belongs to the ribonuclease III family. Homodimer. Mg(2+) is required as a cofactor.

It is found in the cytoplasm. It catalyses the reaction Endonucleolytic cleavage to 5'-phosphomonoester.. In terms of biological role, digests double-stranded RNA. Involved in the processing of primary rRNA transcript to yield the immediate precursors to the large and small rRNAs (23S and 16S). Processes some mRNAs, and tRNAs when they are encoded in the rRNA operon. Processes pre-crRNA and tracrRNA of type II CRISPR loci if present in the organism. The sequence is that of Ribonuclease 3 from Shewanella amazonensis (strain ATCC BAA-1098 / SB2B).